The sequence spans 512 residues: Glycerol kinase 2 (512 aa).

T18 serves as a coordination point for ADP. The ATP site is built by T18, T19, and S20. Residue T18 coordinates sn-glycerol 3-phosphate. ADP is bound at residue R22. The sn-glycerol 3-phosphate site is built by R88, E89, Y140, and D255. Residues R88, E89, Y140, D255, and Q256 each coordinate glycerol. The ADP site is built by T277 and G321. Residues T277, G321, Q325, and G422 each coordinate ATP. ADP contacts are provided by G422 and N426.

The protein belongs to the FGGY kinase family.

It catalyses the reaction glycerol + ATP = sn-glycerol 3-phosphate + ADP + H(+). The protein operates within polyol metabolism; glycerol degradation via glycerol kinase pathway; sn-glycerol 3-phosphate from glycerol: step 1/1. Inhibited by fructose 1,6-bisphosphate (FBP). Its function is as follows. Key enzyme in the regulation of glycerol uptake and metabolism. Catalyzes the phosphorylation of glycerol to yield sn-glycerol 3-phosphate. The protein is Glycerol kinase 2 of Streptomyces coelicolor (strain ATCC BAA-471 / A3(2) / M145).